Here is a 513-residue protein sequence, read N- to C-terminus: Maturase K (513 aa).

Belongs to the intron maturase 2 family. MatK subfamily.

Its subcellular location is the plastid. The protein localises to the chloroplast. In terms of biological role, usually encoded in the trnK tRNA gene intron. Probably assists in splicing its own and other chloroplast group II introns. The polypeptide is Maturase K (Byblis liniflora (Carnivorous plant)).